The chain runs to 101 residues: MAKQALLQRELKRDKLVAKFAKKHAEFKAIANDFKRTDDERALARLELQKLPRNANPTRQRNRCAITGRPRGTFRQFGLARAKIRELAFAGDIPGITKASW.

Belongs to the universal ribosomal protein uS14 family. Part of the 30S ribosomal subunit. Contacts proteins S3 and S10.

In terms of biological role, binds 16S rRNA, required for the assembly of 30S particles and may also be responsible for determining the conformation of the 16S rRNA at the A site. The polypeptide is Small ribosomal subunit protein uS14 (Polaromonas naphthalenivorans (strain CJ2)).